The chain runs to 131 residues: Aspartate 1-decarboxylase (131 aa).

Ser-25 serves as the catalytic Schiff-base intermediate with substrate; via pyruvic acid. A Pyruvic acid (Ser) modification is found at Ser-25. Thr-57 provides a ligand contact to substrate. Residue Tyr-58 is the Proton donor of the active site. 73–75 (GAA) lines the substrate pocket.

It belongs to the PanD family. In terms of assembly, heterooctamer of four alpha and four beta subunits. It depends on pyruvate as a cofactor. Is synthesized initially as an inactive proenzyme, which is activated by self-cleavage at a specific serine bond to produce a beta-subunit with a hydroxyl group at its C-terminus and an alpha-subunit with a pyruvoyl group at its N-terminus.

The protein resides in the cytoplasm. It catalyses the reaction L-aspartate + H(+) = beta-alanine + CO2. The protein operates within cofactor biosynthesis; (R)-pantothenate biosynthesis; beta-alanine from L-aspartate: step 1/1. Catalyzes the pyruvoyl-dependent decarboxylation of aspartate to produce beta-alanine. This is Aspartate 1-decarboxylase from Acaryochloris marina (strain MBIC 11017).